The sequence spans 41 residues: Plantazolicin (41 aa).

Positions 1–27 (MTKITIPTALSAKVHGEGQHLFEPMAA) are excised as a propeptide. Arg-28 is modified (N2,N2-dimethylarginine; in form plantazolicin A). The segment at residues 28 to 29 (RC) is a cross-link (thiazole-4-carboxylic acid (Arg-Cys)). 2 consecutive cross-links (5-methyloxazole-4-carboxylic acid (Cys-Thr)) follow at residues 29 to 30 (CT) and 31 to 32 (CT). The segment at residues 30–31 (TC) is a cross-link (thiazole-4-carboxylic acid (Thr-Cys)). A cross-link (5-methyloxazole-4-carboxylic acid (Thr-Thr)) is located at residues 32-33 (TT). The oxazole-4-carboxylic acid (Ile-Ser) cross-link spans 35–36 (IS). 3 consecutive cross-links (oxazole-4-carboxylic acid (Ser-Ser)) follow at residues 36-37 (SS), 37-38 (SS), and 38-39 (SS). A cross-link (5-methyloxazoline-4-carboxylic acid (Ser-Thr)) is located at residues 39–40 (ST).

Post-translationally, maturation of thiazole and oxazole containing antibiotics involves the enzymatic condensation of a Cys, Ser or Thr with the alpha-carbonyl of the preceding amino acid to form a thioether or ether bond, then dehydration to form a double bond with the alpha-amino nitrogen. Thiazoline or oxazoline ring are dehydrogenated to form thiazole or oxazole rings.

The protein localises to the secreted. It is found in the cell wall. In terms of biological role, peptide antibiotic inhibiting growth of Gram-positive bacteria. The mode of action appears to be disruption of cell walls and lysis of cells. This Bacillus pumilus (strain ATCC 7061 / DSM 27 / CCUG 26015 / JCM 2508 / NBRC 12092 / NCIMB 9369 / NCTC 10337 / NRRL NRS-272 / CCM 2144) protein is Plantazolicin.